Consider the following 305-residue polypeptide: Exosome complex component RRP45 (305 aa).

It belongs to the RNase PH family. As to quaternary structure, component of the RNA exosome complex. Specifically part of the catalytically inactive RNA exosome core complex (Exo-9) which may associate with the catalytic subunits RRP6 and DIS3 in cytoplasmic- and nuclear-specific RNA exosome complex forms. Exo-9 is formed by a hexameric base ring of RNase PH domain-containing subunits and a cap ring consisting of CSL4, RRP4 and RRP40. Interacts with LRP1.

The protein localises to the cytoplasm. The protein resides in the nucleus. It localises to the nucleolus. In terms of biological role, non-catalytic component of the RNA exosome complex which has 3'-&gt;5' exoribonuclease activity and participates in a multitude of cellular RNA processing and degradation events. In the nucleus, the RNA exosome complex is involved in proper maturation of stable RNA species such as rRNA, snRNA and snoRNA, in the elimination of RNA processing by-products and non-coding 'pervasive' transcripts, such as antisense RNA species and cryptic unstable transcripts (CUTs), and of mRNAs with processing defects, thereby limiting or excluding their export to the cytoplasm. In the cytoplasm, the RNA exosome complex is involved in general mRNA turnover and in RNA surveillance pathways, preventing translation of aberrant mRNAs. The catalytic inactive RNA exosome core complex of 9 subunits (Exo-9) is proposed to play a pivotal role in the binding and presentation of RNA for ribonucleolysis, and to serve as a scaffold for the association with catalytic subunits and accessory proteins or complexes. RRP45 is part of the hexameric ring of RNase PH domain-containing subunits proposed to form a central channel which threads RNA substrates for degradation. The polypeptide is Exosome complex component RRP45 (RRP45) (Saccharomyces cerevisiae (strain ATCC 204508 / S288c) (Baker's yeast)).